The sequence spans 293 residues: Phosphoribosylaminoimidazole-succinocarboxamide synthase (293 aa).

Belongs to the SAICAR synthetase family.

The enzyme catalyses 5-amino-1-(5-phospho-D-ribosyl)imidazole-4-carboxylate + L-aspartate + ATP = (2S)-2-[5-amino-1-(5-phospho-beta-D-ribosyl)imidazole-4-carboxamido]succinate + ADP + phosphate + 2 H(+). It participates in purine metabolism; IMP biosynthesis via de novo pathway; 5-amino-1-(5-phospho-D-ribosyl)imidazole-4-carboxamide from 5-amino-1-(5-phospho-D-ribosyl)imidazole-4-carboxylate: step 1/2. This chain is Phosphoribosylaminoimidazole-succinocarboxamide synthase, found in Bordetella parapertussis (strain 12822 / ATCC BAA-587 / NCTC 13253).